Consider the following 833-residue polypeptide: MutS protein homolog 5 (833 aa).

Residues 1–45 (MAFRATPGRTPPGPGPRSGIPSASFPSPQPPMAGPGGIEEEDEEE) form a disordered region. Position 591–598 (591–598 (GPNSSGKS)) interacts with ATP.

It belongs to the DNA mismatch repair MutS family. As to quaternary structure, heterooligomer of MSH4 and MSH5. Interacts with HJURP. Interacts with REDIC1.

Functionally, involved in DNA mismatch repair and meiotic recombination processes. Facilitates crossovers between homologs during meiosis. This is MutS protein homolog 5 (Msh5) from Mus musculus (Mouse).